A 242-amino-acid polypeptide reads, in one-letter code: Venom redulysin 2 (242 aa).

The N-terminal stretch at 1–19 (MSKIWILLLLVGAVQFARG) is a signal peptide. A propeptide spanning residues 20 to 46 (FPALEEEQEDDVIDWPSFEYDLSDEER) is cleaved from the precursor.

This sequence belongs to the redulysin-like family. In terms of processing, contains 5 disulfide bonds. As to expression, expressed by the venom gland (posterior main gland) (at protein level).

It is found in the secreted. Its function is as follows. Highly abundant protein that may be responsible for the observed disruption of sensory neuron membranes, since it is homologous to proteins such as trialysin, which forms pores in lipid bilayers. Probable insecticidal toxin. The protein is Venom redulysin 2 of Platymeris rhadamanthus (Red spot assassin bug).